The following is a 23-amino-acid chain: Potassium channel toxin kappa-KTx 1.2 (23 aa).

Intrachain disulfides connect Cys4–Cys22 and Cys8–Cys18. At Cys22 the chain carries Cysteine amide.

The protein belongs to the short scorpion toxin superfamily. Potassium channel inhibitor kappa-KTx family. Kappa-KTx 1 subfamily. In terms of processing, the two disulfide isomers globular (C1-C3, C2-C4) and beads (C1-C2, C3-C4) do not show activity on Kv10.1/KCNH1/EAG1. As to expression, expressed by the venom gland.

The protein resides in the secreted. Functionally, shows weak blocking activity on voltage-gated potassium channels Kv10.1/KCNH1/EAG1 (IC(50)=26 uM), Kv1.2/KCNA2 (Kd=150 uM), Kv1.3/KCNA3 (Kd=40 uM), Kv1.6/KCNA3 (16.6% inhibition at 40 uM toxin). The block is dose-dependent, voltage-independent, and reversible. Also shows a weak inhibitory activity on the plant pathogen F.culmorum growth (IC(50)=18.8-37.7 uM). The protein is Potassium channel toxin kappa-KTx 1.2 of Chersonesometrus fulvipes (Indian black scorpion).